We begin with the raw amino-acid sequence, 171 residues long: MEEYAREPCPWRIVDDCGGAFTMGTIGGGIFQAIKGFRNSPVGVNHRLRGSLTAIKTRAPQLGGSFAVWGGLFSMIDCSMVQVRGKEDPWNSITSGALTGAILAARNGPVAMVGSAAMGGILLALIEGAGILLTRFASAQFPNGPQFAEDPSQLPSTQLPSSPFGDYRQYQ.

Cysteine 9 and cysteine 78 are disulfide-bonded. 3 helical membrane-spanning segments follow: residues 17–37 (CGGA…IKGF), 63–77 (GGSF…SMID), and 113–133 (VGSA…GILL). Residues 144–171 (GPQFAEDPSQLPSTQLPSSPFGDYRQYQ) are disordered. A compositionally biased stretch (low complexity) spans 151–163 (PSQLPSTQLPSSP).

Belongs to the Tim17/Tim22/Tim23 family. Component of the TIM23 complex at least composed of TIMM23, TIMM17 (TIMM17A or TIMM17B) and TIMM50. The complex interacts with the TIMM44 component of the PAM complex and with DNAJC15. Post-translationally, degraded by YMEL1 downstream of the integrated stress response (ISR).

The protein localises to the mitochondrion inner membrane. Functionally, essential component of the TIM23 complex, a complex that mediates the translocation of transit peptide-containing proteins across the mitochondrial inner membrane. The sequence is that of Mitochondrial import inner membrane translocase subunit Tim17-A (TIMM17A) from Homo sapiens (Human).